A 470-amino-acid chain; its full sequence is DNA primase large subunit (470 aa).

Residues cysteine 279, cysteine 358, cysteine 376, and cysteine 414 each coordinate [4Fe-4S] cluster. The interval 449–470 (EEKKSAKQSNNKENENQSIDEK) is disordered.

This sequence belongs to the eukaryotic-type primase large subunit family. Heterodimer of a small subunit and a large subunit. The cofactor is [4Fe-4S] cluster.

DNA primase is the polymerase that synthesizes small RNA primers for the Okazaki fragments made during discontinuous DNA replication. The polypeptide is DNA primase large subunit (prim2) (Dictyostelium discoideum (Social amoeba)).